The following is a 361-amino-acid chain: Queuine tRNA-ribosyltransferase (361 aa).

The active-site Proton acceptor is aspartate 92. Substrate-binding positions include 92-96 (DSGGF), aspartate 146, glutamine 189, and glycine 216. The segment at 247 to 253 (GVGKPAD) is RNA binding. Aspartate 266 serves as the catalytic Nucleophile. Residues 271 to 275 (TRSGR) form an RNA binding; important for wobble base 34 recognition region. Zn(2+) contacts are provided by cysteine 304, cysteine 306, cysteine 309, and histidine 335.

It belongs to the queuine tRNA-ribosyltransferase family. In terms of assembly, homodimer. Within each dimer, one monomer is responsible for RNA recognition and catalysis, while the other monomer binds to the replacement base PreQ1. The cofactor is Zn(2+).

The catalysed reaction is 7-aminomethyl-7-carbaguanine + guanosine(34) in tRNA = 7-aminomethyl-7-carbaguanosine(34) in tRNA + guanine. It participates in tRNA modification; tRNA-queuosine biosynthesis. Functionally, catalyzes the base-exchange of a guanine (G) residue with the queuine precursor 7-aminomethyl-7-deazaguanine (PreQ1) at position 34 (anticodon wobble position) in tRNAs with GU(N) anticodons (tRNA-Asp, -Asn, -His and -Tyr). Catalysis occurs through a double-displacement mechanism. The nucleophile active site attacks the C1' of nucleotide 34 to detach the guanine base from the RNA, forming a covalent enzyme-RNA intermediate. The proton acceptor active site deprotonates the incoming PreQ1, allowing a nucleophilic attack on the C1' of the ribose to form the product. After dissociation, two additional enzymatic reactions on the tRNA convert PreQ1 to queuine (Q), resulting in the hypermodified nucleoside queuosine (7-(((4,5-cis-dihydroxy-2-cyclopenten-1-yl)amino)methyl)-7-deazaguanosine). In Rickettsia akari (strain Hartford), this protein is Queuine tRNA-ribosyltransferase.